Here is a 434-residue protein sequence, read N- to C-terminus: Tryptophan--tRNA ligase (434 aa).

ATP-binding positions include 14–16 and 22–23; these read TTS and GN. A 'HIGH' region motif is present at residues 15–23; it reads TSGTPHLGN. Asp147 is an L-tryptophan binding site. ATP contacts are provided by residues 159 to 161, Leu199, and 206 to 210; these read GRD and KMSKS. Residues 206–210 carry the 'KMSKS' region motif; it reads KMSKS.

The protein belongs to the class-I aminoacyl-tRNA synthetase family. As to quaternary structure, homodimer.

Its subcellular location is the cytoplasm. It carries out the reaction tRNA(Trp) + L-tryptophan + ATP = L-tryptophyl-tRNA(Trp) + AMP + diphosphate + H(+). Catalyzes the attachment of tryptophan to tRNA(Trp). The chain is Tryptophan--tRNA ligase from Xylella fastidiosa (strain 9a5c).